The following is a 408-amino-acid chain: NADH-quinone oxidoreductase subunit D (408 aa).

The protein belongs to the complex I 49 kDa subunit family. In terms of assembly, NDH-1 is composed of 14 different subunits. Subunits NuoB, C, D, E, F, and G constitute the peripheral sector of the complex.

Its subcellular location is the cell inner membrane. It carries out the reaction a quinone + NADH + 5 H(+)(in) = a quinol + NAD(+) + 4 H(+)(out). Functionally, NDH-1 shuttles electrons from NADH, via FMN and iron-sulfur (Fe-S) centers, to quinones in the respiratory chain. The immediate electron acceptor for the enzyme in this species is believed to be ubiquinone. Couples the redox reaction to proton translocation (for every two electrons transferred, four hydrogen ions are translocated across the cytoplasmic membrane), and thus conserves the redox energy in a proton gradient. This Campylobacter jejuni subsp. jejuni serotype O:2 (strain ATCC 700819 / NCTC 11168) protein is NADH-quinone oxidoreductase subunit D.